The sequence spans 430 residues: MELLHSINDFNEAKQVIAGGVNSPVRAFKSVKGTPPFILKGKGAYLYDVDNNHYIDFVQSWGPLIFGHADEEIEENIINVLKKGTSFGTPTELETTLAKEIISCYEGLDKVRLVSSGTEATMSAIRLARAYSQKDDLIKFEGCYHGHSDSLLVKAGSGCATFGSPSSLGVPNDFSKHTLVARYNDLNSTEECFKKGDVGCVIIEPIAGNMGLVPAQKEFLLGLKALCEKYQAVLILDEVMSGFRASLSGSQEFYGVVPDLVTFGKVIGAGLPLACFGGRAEIMDLLSPIGGVYQAGTLSGNPLAVCAGLSALYKIKRDKTLYTRLNALAVRLAQGLKKSAQSYNIALETLNRGSMFGFFFNENAVRDFDDALKSDTEMFAKFHQKMLFKGVYLACSSFETGFICEPMTEEMIDLAVAKADESFDEIIKGV.

Lys-265 is modified (N6-(pyridoxal phosphate)lysine).

The protein belongs to the class-III pyridoxal-phosphate-dependent aminotransferase family. HemL subfamily. Homodimer. Pyridoxal 5'-phosphate serves as cofactor.

The protein resides in the cytoplasm. The enzyme catalyses (S)-4-amino-5-oxopentanoate = 5-aminolevulinate. The protein operates within porphyrin-containing compound metabolism; protoporphyrin-IX biosynthesis; 5-aminolevulinate from L-glutamyl-tRNA(Glu): step 2/2. This chain is Glutamate-1-semialdehyde 2,1-aminomutase, found in Helicobacter pylori (strain Shi470).